Reading from the N-terminus, the 206-residue chain is MRPLQSYKAFEDHMAQEPVEDTDPSTLSFNTSDKYPVQDTELPKAEECNTITLNCPPNSDMKNQGEENGFPDSTGDPLPEISKDNSCKENCTCSSCLLRAPTISDLLNDQDLLDVIRIKLDPCHPTVKNWRNFASKWGMSYDELCFLEQRPQSPTLEFLLRNSQRTVGQLMELCRLYHRADVEKVLRRWVDEEWPKRERGDPSRHF.

Disordered stretches follow at residues 1-36 (MRPL…DKYP) and 52-77 (TLNC…TGDP). Polar residues-rich tracts occupy residues 24–33 (PSTLSFNTSD) and 52–62 (TLNCPPNSDMK). In terms of domain architecture, Death spans 114–190 (DVIRIKLDPC…DVEKVLRRWV (77 aa)).

Self-associates and binds to EDAR, TRAF1, TRAF2 and TRAF3.

The protein resides in the cytoplasm. In terms of biological role, adapter protein that interacts with EDAR DEATH domain and couples the receptor to EDA signaling pathway during morphogenesis of ectodermal organs. Mediates the activation of NF-kappa-B. The chain is Ectodysplasin-A receptor-associated adapter protein (EDARADD) from Macaca fascicularis (Crab-eating macaque).